An 88-amino-acid chain; its full sequence is UPF0367 protein Synpcc7942_1638 (88 aa).

This sequence belongs to the UPF0367 family.

This Synechococcus elongatus (strain ATCC 33912 / PCC 7942 / FACHB-805) (Anacystis nidulans R2) protein is UPF0367 protein Synpcc7942_1638.